A 213-amino-acid polypeptide reads, in one-letter code: Phosphatidylserine decarboxylase proenzyme (213 aa).

The active-site Schiff-base intermediate with substrate; via pyruvic acid is the serine 180. Serine 180 bears the Pyruvic acid (Ser); by autocatalysis mark.

It belongs to the phosphatidylserine decarboxylase family. PSD-A subfamily. As to quaternary structure, heterodimer of a large membrane-associated beta subunit and a small pyruvoyl-containing alpha subunit. The cofactor is pyruvate. Post-translationally, is synthesized initially as an inactive proenzyme. Formation of the active enzyme involves a self-maturation process in which the active site pyruvoyl group is generated from an internal serine residue via an autocatalytic post-translational modification. Two non-identical subunits are generated from the proenzyme in this reaction, and the pyruvate is formed at the N-terminus of the alpha chain, which is derived from the carboxyl end of the proenzyme. The post-translation cleavage follows an unusual pathway, termed non-hydrolytic serinolysis, in which the side chain hydroxyl group of the serine supplies its oxygen atom to form the C-terminus of the beta chain, while the remainder of the serine residue undergoes an oxidative deamination to produce ammonia and the pyruvoyl prosthetic group on the alpha chain.

It localises to the cell membrane. It catalyses the reaction a 1,2-diacyl-sn-glycero-3-phospho-L-serine + H(+) = a 1,2-diacyl-sn-glycero-3-phosphoethanolamine + CO2. It functions in the pathway phospholipid metabolism; phosphatidylethanolamine biosynthesis; phosphatidylethanolamine from CDP-diacylglycerol: step 2/2. In terms of biological role, catalyzes the formation of phosphatidylethanolamine (PtdEtn) from phosphatidylserine (PtdSer). In Carboxydothermus hydrogenoformans (strain ATCC BAA-161 / DSM 6008 / Z-2901), this protein is Phosphatidylserine decarboxylase proenzyme.